The primary structure comprises 243 residues: Cell surface glycoprotein CD200 receptor 1-B (243 aa).

The Cytoplasmic portion of the chain corresponds to 1 to 29; sequence MEISQQAGWCKKPASPMNTRAALEAVRNT. The helical; Signal-anchor for type II membrane protein transmembrane segment at 30–47 threads the bilayer; the sequence is AWTIVLLTSAAVMGASGI. The Ig-like V-type domain occupies 47–146; it reads ISRVSANLGH…GNFHYLYHLT (100 aa). The Lumenal segment spans residues 48-243; the sequence is SRVSANLGHS…LAQLPGGSAP (196 aa). Cystine bridges form between Cys-62–Cys-130 and Cys-165–Cys-214. 6 N-linked (GlcNAc...) asparagine glycosylation sites follow: Asn-64, Asn-67, Asn-127, Asn-193, Asn-222, and Asn-228. Residues 144-228 enclose the Ig-like C2-type domain; it reads HLTVLVAPRM…ATLNETRSIN (85 aa).

It belongs to the CD200R family. In terms of tissue distribution, expressed in peripheral blood lymphocytes (PBL) and peripheral blood mononuclear cells (PBMC).

The protein localises to the membrane. This chain is Cell surface glycoprotein CD200 receptor 1-B (CD200R1B), found in Gallus gallus (Chicken).